The chain runs to 232 residues: Orotidine 5'-phosphate decarboxylase (232 aa).

Substrate is bound by residues aspartate 13, lysine 35, 62–71 (DLKFHDIPNT), threonine 122, arginine 182, glutamine 191, glycine 211, and arginine 212. The Proton donor role is filled by lysine 64.

Belongs to the OMP decarboxylase family. Type 1 subfamily. Homodimer.

The catalysed reaction is orotidine 5'-phosphate + H(+) = UMP + CO2. Its pathway is pyrimidine metabolism; UMP biosynthesis via de novo pathway; UMP from orotate: step 2/2. Catalyzes the decarboxylation of orotidine 5'-monophosphate (OMP) to uridine 5'-monophosphate (UMP). The protein is Orotidine 5'-phosphate decarboxylase of Pseudomonas fluorescens (strain Pf0-1).